The following is a 1134-amino-acid chain: Sterol regulatory element-binding protein 1 (1134 aa).

The transcriptional activation (acidic) stretch occupies residues 1–60; the sequence is MDELAFGEAALEQTLAEMCELDTAVLNDIEDMLQLINNQDSDFPGLFDAPYAGGETGDTG. Residues 1-477 lie on the Cytoplasmic side of the membrane; that stretch reads MDELAFGEAA…HSRGMLDRSR (477 aa). A 9aaTAD motif is present at residues 27-35; the sequence is NDIEDMLQL. The disordered stretch occupies residues 46 to 73; the sequence is LFDAPYAGGETGDTGPSSPGANSPESFS. Over residues 59–69 the composition is skewed to polar residues; the sequence is TGPSSPGANSP. Residues S96 and S115 each carry the phosphoserine modification. 2 disordered regions span residues 130 to 149 and 170 to 195; these read LQPA…SFPA and SGTL…VLPT. Over residues 170–179 the composition is skewed to polar residues; sequence SGTLPGNTQQ. Residues 227-487 form an interaction with LMNA region; sequence QQVPVVLQPH…LALCVLAFLC (261 aa). A bHLH domain is found at 317–367; sequence EKRTAHNAIEKRYRSSINDKIVELKDLVVGTEAKLNKSAVLRKAIDYIRFL. A phosphoserine; by SIK1 mark is found at S331 and S332. The segment at 367–388 is leucine-zipper; that stretch reads LQHSNQKLKQENLTLRSAHKSK. At S389 the chain carries Phosphoserine; by AMPK. S395 carries the post-translational modification Phosphoserine; by SIK1. Residues 415 to 468 form a disordered region; it reads VETLTPPPSDAGSPSQSSPLSFGSRASSSGGSDSEPDSPAFEDSQVKAQRLPSH. Positions 424 to 453 are enriched in low complexity; it reads DAGSPSQSSPLSFGSRASSSGGSDSEPDSP. Phosphoserine is present on S448. A helical transmembrane segment spans residues 478–498; that stretch reads LALCVLAFLCLTCNPLASLFG. At 499-536 the chain is on the lumenal side; that stretch reads WGILTPSDATGTHRSSGRSMLEAESRDGSNWTQWLLPP. A helical membrane pass occupies residues 537-557; the sequence is LVWLANGLLVLACLALLFVYG. At 558-1134 the chain is on the cytoplasmic side; that stretch reads EPVTRPHSGP…LGGGTTVTSS (577 aa). S1047 carries the phosphoserine modification.

The protein belongs to the SREBP family. As to quaternary structure, forms a tight complex with SCAP, the SCAP-SREBP complex, in the endoplasmic reticulum membrane and the Golgi apparatus. Interacts with PAQR3; the interaction anchors the SCAP-SREBP complex to the Golgi apparatus in low cholesterol conditions. In terms of assembly, efficient DNA binding of the soluble transcription factor fragment requires dimerization with another bHLH protein. Interacts with CEBPA, the interaction produces a transcriptional synergy. Interacts with LMNA. In terms of processing, processed in the Golgi apparatus, releasing the protein from the membrane. At low cholesterol the SCAP-SREBP complex is recruited into COPII vesicles for export from the endoplasmic reticulum. In the Golgi, complex SREBPs are cleaved sequentially by site-1 (MBTPS1, S1P) and site-2 (MBTPS2, S2P) proteases. The first cleavage by site-1 protease occurs within the luminal loop, the second cleavage by site-2 protease occurs within the first transmembrane domain, releasing the transcription factor from the Golgi membrane. Post-translationally, phosphorylated by AMPK, leading to suppress protein processing and nuclear translocation, and repress target gene expression. Phosphorylation at Ser-389 by SIK1 represses activity possibly by inhibiting DNA-binding. SCAP-free SREBF1 is ubiquitinated by the BCR(ARMC5) complex, leading to its degradation. In terms of processing, ubiquitinated; the nuclear form has a rapid turnover and is rapidly ubiquitinated and degraded by the proteasome in the nucleus. As to expression, predominant isoform expressed in most tissues. Predominates in liver, adrenal gland, brain and adipose tissue. Also found in kidney, thymus, testis, muscle, jejunum, and ileum. In terms of tissue distribution, expressed only in select tissues, such as intestinal epithelial, heart, macrophage and bone marrow dendritic cells. Also found in kidney, thymus, testis, muscle, jejunum, and ileum.

The protein localises to the endoplasmic reticulum membrane. Its subcellular location is the golgi apparatus membrane. It localises to the cytoplasmic vesicle. It is found in the COPII-coated vesicle membrane. The protein resides in the nucleus. Its activity is regulated as follows. Activation by cleavage is down-regulated upon activation of SIRT3-dependent PRKAA1/AMPK-alpha signaling cascade which leads to inhibition of ATP-consuming lipogenesis to restore cellular energy balance. In terms of biological role, precursor of the transcription factor form (Processed sterol regulatory element-binding protein 1), which is embedded in the endoplasmic reticulum membrane. Low sterol concentrations promote processing of this form, releasing the transcription factor form that translocates into the nucleus and activates transcription of genes involved in cholesterol biosynthesis and lipid homeostasis. Its function is as follows. Key transcription factor that regulates expression of genes involved in cholesterol biosynthesis and lipid homeostasis. Binds to the sterol regulatory element 1 (SRE-1) (5'-ATCACCCCAC-3'). Has dual sequence specificity binding to both an E-box motif (5'-ATCACGTGA-3') and to SRE-1 (5'-ATCACCCCAC-3'). Regulates the promoters of genes involved in cholesterol biosynthesis and the LDL receptor (LDLR) pathway of sterol regulation. Isoform expressed only in select tissues, which has higher transcriptional activity compared to SREBP-1C. Able to stimulate both lipogenic and cholesterogenic gene expression. Has a role in the nutritional regulation of fatty acids and triglycerides in lipogenic organs such as the liver. Required for innate immune response in macrophages by regulating lipid metabolism. Functionally, predominant isoform expressed in most tissues, which has weaker transcriptional activity compared to isoform SREBP-1A. Primarily controls expression of lipogenic gene. Strongly activates global lipid synthesis in rapidly growing cells. The protein is Sterol regulatory element-binding protein 1 of Mus musculus (Mouse).